The following is a 337-amino-acid chain: Protein-methionine-sulfoxide reductase catalytic subunit MsrP (337 aa).

Residues 1–50 (MLIKLPSASGSKESDVTPESIYLSRRTLLASSLAGLAVTALPRWASAADA) constitute a signal peptide (tat-type signal). Residues Asn94, 97-98 (YE), Cys152, Thr187, Asn237, Arg242, and 253-255 (SVK) each bind Mo-molybdopterin.

Belongs to the MsrP family. In terms of assembly, heterodimer of a catalytic subunit (MsrP) and a heme-binding subunit (MsrQ). Mo-molybdopterin serves as cofactor. Predicted to be exported by the Tat system. The position of the signal peptide cleavage has not been experimentally proven.

The protein localises to the periplasm. The enzyme catalyses L-methionyl-[protein] + a quinone + H2O = L-methionyl-(S)-S-oxide-[protein] + a quinol. It catalyses the reaction L-methionyl-[protein] + a quinone + H2O = L-methionyl-(R)-S-oxide-[protein] + a quinol. Functionally, part of the MsrPQ system that repairs oxidized periplasmic proteins containing methionine sulfoxide residues (Met-O), using respiratory chain electrons. Thus protects these proteins from oxidative-stress damage caused by reactive species of oxygen and chlorine generated by the host defense mechanisms. MsrPQ is essential for the maintenance of envelope integrity under bleach stress, rescuing a wide series of structurally unrelated periplasmic proteins from methionine oxidation. The catalytic subunit MsrP is non-stereospecific, being able to reduce both (R-) and (S-) diastereoisomers of methionine sulfoxide. This Pseudomonas syringae pv. tomato (strain ATCC BAA-871 / DC3000) protein is Protein-methionine-sulfoxide reductase catalytic subunit MsrP.